The chain runs to 203 residues: Pyrrolidone-carboxylate peptidase (203 aa).

Catalysis depends on residues Glu-78, Cys-141, and His-165.

It belongs to the peptidase C15 family. As to quaternary structure, homotetramer.

The protein localises to the cytoplasm. It carries out the reaction Release of an N-terminal pyroglutamyl group from a polypeptide, the second amino acid generally not being Pro.. Removes 5-oxoproline from various penultimate amino acid residues except L-proline. This Thermoanaerobacter pseudethanolicus (strain ATCC 33223 / 39E) (Clostridium thermohydrosulfuricum) protein is Pyrrolidone-carboxylate peptidase.